We begin with the raw amino-acid sequence, 244 residues long: uncharacterized protein (244 aa).

Positions 30–49 (RETNESPKSQNPSEEATTVN) are disordered. The segment covering 35–49 (SPKSQNPSEEATTVN) has biased composition (polar residues). A run of 4 helical transmembrane segments spans residues 96 to 116 (LWGTCVILSTLFWSYYVLSNS), 128 to 148 (LLFILIIALDALLTVSLFGLF), 171 to 191 (GFFINVLSTMVQALVTVTIAF), and 194 to 214 (FVTIDFPIYVFSSLFLYHPLS). The interval 224–244 (QLDGSGERKTDSSLVHQNPPN) is disordered. Over residues 235 to 244 (SSLVHQNPPN) the composition is skewed to polar residues.

It is found in the nucleus membrane. This is an uncharacterized protein from Schizosaccharomyces pombe (strain 972 / ATCC 24843) (Fission yeast).